Reading from the N-terminus, the 265-residue chain is 4-hydroxy-tetrahydrodipicolinate reductase (265 aa).

Residues 7-12 (GASGRM) and D33 each bind NAD(+). R34 contacts NADP(+). NAD(+) contacts are provided by residues 96-98 (GTT) and 120-123 (AANM). The Proton donor/acceptor role is filled by H153. H154 contacts (S)-2,3,4,5-tetrahydrodipicolinate. Catalysis depends on K157, which acts as the Proton donor. 163 to 164 (GT) provides a ligand contact to (S)-2,3,4,5-tetrahydrodipicolinate.

Belongs to the DapB family.

Its subcellular location is the cytoplasm. The catalysed reaction is (S)-2,3,4,5-tetrahydrodipicolinate + NAD(+) + H2O = (2S,4S)-4-hydroxy-2,3,4,5-tetrahydrodipicolinate + NADH + H(+). The enzyme catalyses (S)-2,3,4,5-tetrahydrodipicolinate + NADP(+) + H2O = (2S,4S)-4-hydroxy-2,3,4,5-tetrahydrodipicolinate + NADPH + H(+). It participates in amino-acid biosynthesis; L-lysine biosynthesis via DAP pathway; (S)-tetrahydrodipicolinate from L-aspartate: step 4/4. Functionally, catalyzes the conversion of 4-hydroxy-tetrahydrodipicolinate (HTPA) to tetrahydrodipicolinate. The chain is 4-hydroxy-tetrahydrodipicolinate reductase from Burkholderia orbicola (strain MC0-3).